The sequence spans 374 residues: Alanine racemase (374 aa).

Lysine 35 (proton acceptor; specific for D-alanine) is an active-site residue. An N6-(pyridoxal phosphate)lysine modification is found at lysine 35. A substrate-binding site is contributed by arginine 133. The active-site Proton acceptor; specific for L-alanine is the tyrosine 264. Substrate is bound at residue methionine 312.

This sequence belongs to the alanine racemase family. Pyridoxal 5'-phosphate is required as a cofactor.

It carries out the reaction L-alanine = D-alanine. It participates in amino-acid biosynthesis; D-alanine biosynthesis; D-alanine from L-alanine: step 1/1. Catalyzes the interconversion of L-alanine and D-alanine. May also act on other amino acids. In Thermobifida fusca (strain YX), this protein is Alanine racemase (alr).